A 494-amino-acid chain; its full sequence is Bifunctional pantoate ligase/cytidylate kinase (494 aa).

Residues 1–258 (MHFVPTMGGL…CGSTRLIDHA (258 aa)) form a pantoate--beta-alanine ligase region. ATP is bound at residue 7 to 14 (MGGLHHGH). Residue His14 is the Proton donor of the active site. Gln41 serves as a coordination point for (R)-pantoate. Beta-alanine is bound at residue Gln41. Residue 130–133 (GEKD) coordinates ATP. Gln136 is a (R)-pantoate binding site. Residues Val159 and 167–170 (SSSR) contribute to the ATP site. The tract at residues 259 to 494 (FLMTRSPLVA…VGEEVWPTPV (236 aa)) is cytidylate kinase.

It in the N-terminal section; belongs to the pantothenate synthetase family. In the C-terminal section; belongs to the cytidylate kinase family. Type 1 subfamily.

It localises to the cytoplasm. The catalysed reaction is (R)-pantoate + beta-alanine + ATP = (R)-pantothenate + AMP + diphosphate + H(+). It carries out the reaction CMP + ATP = CDP + ADP. It catalyses the reaction dCMP + ATP = dCDP + ADP. It participates in cofactor biosynthesis; (R)-pantothenate biosynthesis; (R)-pantothenate from (R)-pantoate and beta-alanine: step 1/1. Catalyzes the condensation of pantoate with beta-alanine in an ATP-dependent reaction via a pantoyl-adenylate intermediate. Its function is as follows. Catalyzes the transfer of a phosphate group from ATP to either CMP or dCMP to form CDP or dCDP and ADP, respectively. This chain is Bifunctional pantoate ligase/cytidylate kinase, found in Synechococcus sp. (strain CC9311).